The following is a 371-amino-acid chain: uncharacterized protein (371 aa).

It to A.pernix APE_1804 and S.solfataricus SSO2105.

This is an uncharacterized protein from Aeropyrum pernix (strain ATCC 700893 / DSM 11879 / JCM 9820 / NBRC 100138 / K1).